A 240-amino-acid chain; its full sequence is tRNA (guanine-N(7)-)-methyltransferase (240 aa).

The segment covering 1–10 (MTESQDTPIT) has biased composition (polar residues). A disordered region spans residues 1-20 (MTESQDTPITTDGEARPHRR). S-adenosyl-L-methionine is bound by residues Glu70, Glu95, Asp122, and Asp145. The active site involves Asp145. Substrate is bound by residues Lys149, Asp181, and 218 to 221 (TKFE).

It belongs to the class I-like SAM-binding methyltransferase superfamily. TrmB family.

The catalysed reaction is guanosine(46) in tRNA + S-adenosyl-L-methionine = N(7)-methylguanosine(46) in tRNA + S-adenosyl-L-homocysteine. Its pathway is tRNA modification; N(7)-methylguanine-tRNA biosynthesis. Catalyzes the formation of N(7)-methylguanine at position 46 (m7G46) in tRNA. This is tRNA (guanine-N(7)-)-methyltransferase from Pseudomonas putida (strain W619).